Reading from the N-terminus, the 461-residue chain is Adenosylmethionine-8-amino-7-oxononanoate aminotransferase (461 aa).

117-118 serves as a coordination point for pyridoxal 5'-phosphate; the sequence is GA. Tyr150 contributes to the substrate binding site. Asp263 is a pyridoxal 5'-phosphate binding site. 3 residues coordinate substrate: Lys296, Gly331, and Arg426. An N6-(pyridoxal phosphate)lysine modification is found at Lys296.

This sequence belongs to the class-III pyridoxal-phosphate-dependent aminotransferase family. BioA subfamily. Homodimer. Pyridoxal 5'-phosphate is required as a cofactor.

The protein localises to the cytoplasm. The catalysed reaction is (8S)-8-amino-7-oxononanoate + S-adenosyl-L-methionine = S-adenosyl-4-methylsulfanyl-2-oxobutanoate + (7R,8S)-7,8-diammoniononanoate. Its pathway is cofactor biosynthesis; biotin biosynthesis; 7,8-diaminononanoate from 8-amino-7-oxononanoate (SAM route): step 1/1. Functionally, catalyzes the transfer of the alpha-amino group from S-adenosyl-L-methionine (SAM) to 7-keto-8-aminopelargonic acid (KAPA) to form 7,8-diaminopelargonic acid (DAPA). It is the only aminotransferase known to utilize SAM as an amino donor. The chain is Adenosylmethionine-8-amino-7-oxononanoate aminotransferase from Methanocaldococcus jannaschii (strain ATCC 43067 / DSM 2661 / JAL-1 / JCM 10045 / NBRC 100440) (Methanococcus jannaschii).